Consider the following 487-residue polypeptide: Betaine aldehyde dehydrogenase 1 (487 aa).

K(+)-binding residues include serine 26, isoleucine 27, and aspartate 93. An NAD(+)-binding site is contributed by 150 to 152 (GAW). Catalysis depends on lysine 162, which acts as the Charge relay system. NAD(+) contacts are provided by residues 176-179 (KPSE) and 229-232 (SVPT). Leucine 244 is a binding site for K(+). Glutamate 250 serves as the catalytic Proton acceptor. Residues glycine 252, cysteine 284, and glutamate 384 each coordinate NAD(+). The Nucleophile role is filled by cysteine 284. Cysteine sulfenic acid (-SOH) is present on cysteine 284. K(+)-binding residues include lysine 454 and glycine 457. Glutamate 461 serves as the catalytic Charge relay system.

This sequence belongs to the aldehyde dehydrogenase family. In terms of assembly, dimer of dimers. K(+) serves as cofactor.

It carries out the reaction betaine aldehyde + NAD(+) + H2O = glycine betaine + NADH + 2 H(+). The protein operates within amine and polyamine biosynthesis; betaine biosynthesis via choline pathway; betaine from betaine aldehyde: step 1/1. Involved in the biosynthesis of the osmoprotectant glycine betaine. Catalyzes the irreversible oxidation of betaine aldehyde to the corresponding acid. This is Betaine aldehyde dehydrogenase 1 from Rhizobium meliloti (strain 1021) (Ensifer meliloti).